A 373-amino-acid polypeptide reads, in one-letter code: Glutamate 5-kinase (373 aa).

K15 is a binding site for ATP. Substrate contacts are provided by S55, D142, and N154. ATP-binding positions include 174-175 (TD) and 216-222 (TGGMATK). One can recognise a PUA domain in the interval 281 to 359 (AGSIVVDAGA…SEIEGILGFR (79 aa)).

This sequence belongs to the glutamate 5-kinase family.

Its subcellular location is the cytoplasm. The enzyme catalyses L-glutamate + ATP = L-glutamyl 5-phosphate + ADP. It functions in the pathway amino-acid biosynthesis; L-proline biosynthesis; L-glutamate 5-semialdehyde from L-glutamate: step 1/2. Functionally, catalyzes the transfer of a phosphate group to glutamate to form L-glutamate 5-phosphate. The polypeptide is Glutamate 5-kinase (Citrifermentans bemidjiense (strain ATCC BAA-1014 / DSM 16622 / JCM 12645 / Bem) (Geobacter bemidjiensis)).